Here is a 559-residue protein sequence, read N- to C-terminus: MAAKLRAHQVDVDPDFAPQSRPRSCTWPLPQPDLAGDEDGALGAGVAEGSEDCGPERRATAPAMAPAPPLGAEVGPLRKAKSSRRNAWGNLSYADLITKAIESAPDKRLTLSQIYDWMVRYVPYFKDKGDSNSSAGWKNSIRHNLSLHTRFIRVQNEGTGKSSWWMLNPEGGKTGKTPRRRAVSMDNGAKFLRIKGKASKKKQLHLPERSPDDSPPGAPVPGPLSASAKWAASPASHASDDYEAWADFRGSRRPLLGEAAELEDDEALEALAPSSPLMYPSPASALSPALGARCPGELPRLAELGGPLGLHGGGVAGLPDALLDGAQDAYGPRARAGTPSYFGSCKASAYGGGGGFGPPALGSLRRLPMQTIQENKQASFVQAAAPFRPGALPALLPPPPPAPRPGPLLGAPGELALAGAAAAYPGKGAAPYAPPAPSRSALAHPISLMTLPGEAGAAGLAPPAHAAAFGGPPGGLLLDALPGPYAAAAAGPLGAGPDRFPADLDLDMFSGSLECDVESIILNDFMDSDEMDFNFDSALPPPPPGLAGAPPPNQSWVPG.

Disordered stretches follow at residues 1–77 and 163–183; these read MAAK…VGPL and SWWM…RRAV. The fork-head DNA-binding region spans 88 to 182; the sequence is WGNLSYADLI…KTGKTPRRRA (95 aa). Ser184 carries the phosphoserine modification. Disordered regions lie at residues 197 to 232 and 534 to 559; these read KASK…KWAA and NFDS…WVPG. Composition is skewed to pro residues over residues 213–222 and 539–553; these read DSPPGAPVPG and LPPP…PPPN.

Phosphorylation of Ser-184 is be important in regulating the transacriptional activity. In terms of tissue distribution, expressed in brain in areas of the nucleus accumbens, cingulate cortex, parts of the amygdala and in the hippocampus.

It is found in the cytoplasm. Its subcellular location is the nucleus. Transcriptional activator. The chain is Forkhead box protein O6 (Foxo6) from Mus musculus (Mouse).